Here is a 156-residue protein sequence, read N- to C-terminus: Small ribosomal subunit protein uS7 (156 aa).

The protein belongs to the universal ribosomal protein uS7 family. In terms of assembly, part of the 30S ribosomal subunit. Contacts proteins S9 and S11.

Functionally, one of the primary rRNA binding proteins, it binds directly to 16S rRNA where it nucleates assembly of the head domain of the 30S subunit. Is located at the subunit interface close to the decoding center, probably blocks exit of the E-site tRNA. This Proteus mirabilis (strain HI4320) protein is Small ribosomal subunit protein uS7.